The sequence spans 210 residues: Dephospho-CoA kinase (210 aa).

In terms of domain architecture, DPCK spans 4 to 202 (WVGLTGGIGS…AFYSGIFASK (199 aa)). Residue 12–17 (GSGKSA) participates in ATP binding.

The protein belongs to the CoaE family.

The protein localises to the cytoplasm. It carries out the reaction 3'-dephospho-CoA + ATP = ADP + CoA + H(+). The protein operates within cofactor biosynthesis; coenzyme A biosynthesis; CoA from (R)-pantothenate: step 5/5. In terms of biological role, catalyzes the phosphorylation of the 3'-hydroxyl group of dephosphocoenzyme A to form coenzyme A. The sequence is that of Dephospho-CoA kinase from Neisseria meningitidis serogroup B (strain ATCC BAA-335 / MC58).